Reading from the N-terminus, the 411-residue chain is Imidazolonepropionase (411 aa).

Fe(3+) is bound by residues His-78 and His-80. Zn(2+) is bound by residues His-78 and His-80. The 4-imidazolone-5-propanoate site is built by Arg-87, Tyr-150, and His-183. Residue Tyr-150 coordinates N-formimidoyl-L-glutamate. A Fe(3+)-binding site is contributed by His-248. Residue His-248 participates in Zn(2+) binding. Gln-251 is a binding site for 4-imidazolone-5-propanoate. Asp-322 is a Fe(3+) binding site. Asp-322 is a binding site for Zn(2+). N-formimidoyl-L-glutamate is bound by residues Asn-324 and Gly-326. Ser-327 serves as a coordination point for 4-imidazolone-5-propanoate.

The protein belongs to the metallo-dependent hydrolases superfamily. HutI family. Zn(2+) is required as a cofactor. Requires Fe(3+) as cofactor.

It localises to the cytoplasm. The enzyme catalyses 4-imidazolone-5-propanoate + H2O = N-formimidoyl-L-glutamate. It participates in amino-acid degradation; L-histidine degradation into L-glutamate; N-formimidoyl-L-glutamate from L-histidine: step 3/3. Its function is as follows. Catalyzes the hydrolytic cleavage of the carbon-nitrogen bond in imidazolone-5-propanoate to yield N-formimidoyl-L-glutamate. It is the third step in the universal histidine degradation pathway. This chain is Imidazolonepropionase, found in Flavobacterium johnsoniae (strain ATCC 17061 / DSM 2064 / JCM 8514 / BCRC 14874 / CCUG 350202 / NBRC 14942 / NCIMB 11054 / UW101) (Cytophaga johnsonae).